The following is a 347-amino-acid chain: Haptoglobin (347 aa).

Residues 1-18 (MRALGAVVTLLLWGQLFA) form the signal peptide. Positions 31–88 (DSCPKPPEIANGYVEHLVRYRCRQFYRLRAEGDGVYTLNDEKQWVNTVAGEKLPECEA) constitute a Sushi domain. Cystine bridges form between Cys52-Cys86, Cys90-Cys207, Cys250-Cys281, and Cys292-Cys322. One can recognise a Peptidase S1 domain in the interval 103-345 (IIGGSMDAKG…LKDWVQETMA (243 aa)). 4 N-linked (GlcNAc...) asparagine glycosylation sites follow: Asn148, Asn182, Asn256, and Asn264. Positions 259 to 264 (VPEKKN) are interaction with CD163.

The protein belongs to the peptidase S1 family. As to quaternary structure, tetramer of two alpha and two beta chains; disulfide-linked. The hemoglobin/haptoglobin complex is composed of a haptoglobin dimer bound to two hemoglobin alpha-beta dimers. Interacts with CD163. Interacts with ERGIC3. As to expression, expressed by the liver and secreted in plasma.

The protein localises to the secreted. Its function is as follows. As a result of hemolysis, hemoglobin is found to accumulate in the kidney and is secreted in the urine. Haptoglobin captures, and combines with free plasma hemoglobin to allow hepatic recycling of heme iron and to prevent kidney damage. Haptoglobin also acts as an antioxidant, has antibacterial activity and plays a role in modulating many aspects of the acute phase response. Hemoglobin/haptoglobin complexes are rapidly cleared by the macrophage CD163 scavenger receptor expressed on the surface of liver Kupfer cells through an endocytic lysosomal degradation pathway. This is Haptoglobin (Hp) from Mus musculus (Mouse).